Consider the following 388-residue polypeptide: (S)-8-oxocitronellyl enol synthase ISY1 (388 aa).

Residues 35–37 (TGI), 63–64 (RR), 81–82 (DV), 105–106 (TW), and Q143 contribute to the NADP(+) site. Catalysis depends on residues K147 and Y178. Residues Y178, I205, and 212–214 (SMM) each bind NADP(+).

It belongs to the short-chain dehydrogenases/reductases (SDR) family.

It carries out the reaction (S)-8-oxocitronellyl enol + NADP(+) = (6E)-8-oxogeranial + NADPH + H(+). The catalysed reaction is (S)-8-oxocitronellyl enol + NAD(+) = (6E)-8-oxogeranial + NADH + H(+). Functionally, iridoid synthase that catalyzes the first step in generation of the iridoid ring scaffold using the linear monoterpene (6E)-8-oxogeranial as substrate. Iridoids comprise a large family of distinctive bicyclic monoterpenes that possess a wide range of pharmacological activities, including anticancer, anti-inflammatory, antifungal and antibacterial activities. Catalyzes the conversion of the linear monoterpene (6E)-8-oxogeranial to (S)-8-oxocitronellyl enol, a precursor of nepetalactones, which are metabolites that are both insect-repellent and have euphoric effect in cats. The polypeptide is (S)-8-oxocitronellyl enol synthase ISY1 (Nepeta cataria (Catnip)).